Consider the following 202-residue polypeptide: Pyridoxal 5'-phosphate synthase subunit PdxT (202 aa).

52 to 54 (GES) lines the L-glutamine pocket. Cys84 functions as the Nucleophile in the catalytic mechanism. L-glutamine is bound by residues Arg120 and 148–149 (IR). Residues His185 and Glu187 each act as charge relay system in the active site.

This sequence belongs to the glutaminase PdxT/SNO family. In the presence of PdxS, forms a dodecamer of heterodimers. Only shows activity in the heterodimer.

The catalysed reaction is aldehydo-D-ribose 5-phosphate + D-glyceraldehyde 3-phosphate + L-glutamine = pyridoxal 5'-phosphate + L-glutamate + phosphate + 3 H2O + H(+). It carries out the reaction L-glutamine + H2O = L-glutamate + NH4(+). Its pathway is cofactor biosynthesis; pyridoxal 5'-phosphate biosynthesis. In terms of biological role, catalyzes the hydrolysis of glutamine to glutamate and ammonia as part of the biosynthesis of pyridoxal 5'-phosphate. The resulting ammonia molecule is channeled to the active site of PdxS. In Methanopyrus kandleri (strain AV19 / DSM 6324 / JCM 9639 / NBRC 100938), this protein is Pyridoxal 5'-phosphate synthase subunit PdxT.